We begin with the raw amino-acid sequence, 200 residues long: Phospholipase A2 inhibitor gamma subunit B (200 aa).

A signal peptide spans 1 to 19 (MKSFLFCCLLGTFLAIGMC). 8 disulfides stabilise this stretch: Cys22/Cys46, Cys25/Cys32, Cys39/Cys67, Cys73/Cys94, Cys95/Cys100, Cys120/Cys145, Cys138/Cys165, and Cys171/Cys191. Asn33 is a glycosylation site (N-linked (GlcNAc...) asparagine).

It belongs to the CNF-like-inhibitor family. In terms of assembly, heterodimer of subunit A and subunit B. Expressed by the liver.

It is found in the secreted. In terms of biological role, inhibits the enzymatic activity of phospholipase A2 (PA2). In Gloydius brevicaudus siniticus (Chinese mamushi), this protein is Phospholipase A2 inhibitor gamma subunit B.